Consider the following 245-residue polypeptide: tRNA1(Val) (adenine(37)-N6)-methyltransferase (245 aa).

The protein belongs to the methyltransferase superfamily. tRNA (adenine-N(6)-)-methyltransferase family.

The protein localises to the cytoplasm. The catalysed reaction is adenosine(37) in tRNA1(Val) + S-adenosyl-L-methionine = N(6)-methyladenosine(37) in tRNA1(Val) + S-adenosyl-L-homocysteine + H(+). Specifically methylates the adenine in position 37 of tRNA(1)(Val) (anticodon cmo5UAC). This chain is tRNA1(Val) (adenine(37)-N6)-methyltransferase, found in Citrobacter koseri (strain ATCC BAA-895 / CDC 4225-83 / SGSC4696).